A 182-amino-acid polypeptide reads, in one-letter code: Adenine phosphoribosyltransferase (182 aa).

Belongs to the purine/pyrimidine phosphoribosyltransferase family. As to quaternary structure, homodimer.

It is found in the cytoplasm. It carries out the reaction AMP + diphosphate = 5-phospho-alpha-D-ribose 1-diphosphate + adenine. It functions in the pathway purine metabolism; AMP biosynthesis via salvage pathway; AMP from adenine: step 1/1. In terms of biological role, catalyzes a salvage reaction resulting in the formation of AMP, that is energically less costly than de novo synthesis. The protein is Adenine phosphoribosyltransferase of Streptomyces coelicolor (strain ATCC BAA-471 / A3(2) / M145).